The sequence spans 717 residues: Polyribonucleotide nucleotidyltransferase (717 aa).

The Mg(2+) site is built by Asp-488 and Asp-494. The region spanning 555 to 614 (PRIEVMNIPVDKIREVIGSGGKVIREIVEKTGAKINIDDDGTVKIASASAKEIEAARKWI) is the KH domain. The 69-residue stretch at 624–692 (GQVYEGTVVK…ERGKVRLSMK (69 aa)) folds into the S1 motif domain.

This sequence belongs to the polyribonucleotide nucleotidyltransferase family. Mg(2+) is required as a cofactor.

It localises to the cytoplasm. The catalysed reaction is RNA(n+1) + phosphate = RNA(n) + a ribonucleoside 5'-diphosphate. Functionally, involved in mRNA degradation. Catalyzes the phosphorolysis of single-stranded polyribonucleotides processively in the 3'- to 5'-direction. The polypeptide is Polyribonucleotide nucleotidyltransferase (Rhizobium meliloti (strain 1021) (Ensifer meliloti)).